Consider the following 143-residue polypeptide: D-aminoacyl-tRNA deacylase (143 aa).

The Gly-cisPro motif, important for rejection of L-amino acids signature appears at 135–136 (GP).

The protein belongs to the DTD family. Homodimer.

The protein localises to the cytoplasm. The enzyme catalyses glycyl-tRNA(Ala) + H2O = tRNA(Ala) + glycine + H(+). The catalysed reaction is a D-aminoacyl-tRNA + H2O = a tRNA + a D-alpha-amino acid + H(+). In terms of biological role, an aminoacyl-tRNA editing enzyme that deacylates mischarged D-aminoacyl-tRNAs. Also deacylates mischarged glycyl-tRNA(Ala), protecting cells against glycine mischarging by AlaRS. Acts via tRNA-based rather than protein-based catalysis; rejects L-amino acids rather than detecting D-amino acids in the active site. By recycling D-aminoacyl-tRNA to D-amino acids and free tRNA molecules, this enzyme counteracts the toxicity associated with the formation of D-aminoacyl-tRNA entities in vivo and helps enforce protein L-homochirality. In Mycolicibacterium gilvum (strain PYR-GCK) (Mycobacterium gilvum (strain PYR-GCK)), this protein is D-aminoacyl-tRNA deacylase.